Here is a 402-residue protein sequence, read N- to C-terminus: Protein FAM53A (402 aa).

Serine 119 is modified (phosphoserine). A disordered region spans residues 170–215; that stretch reads LVPGLPRRPVSPAGPTSPLTPRPASASSGFVDGSEGSTSSGPPWLS. The Nuclear localization signal motif lies at 273–281; that stretch reads RRVRRKRRR. A phosphoserine mark is found at serine 306 and serine 309. The segment covering 323–333 has biased composition (polar residues); the sequence is TLVSSPCNSQG. Residues 323-402 are disordered; that stretch reads TLVSSPCNSQ…DLDLEQIENN (80 aa). The segment covering 336 to 345 has biased composition (low complexity); it reads GIITPSSSPR.

It belongs to the FAM53 family.

The protein localises to the nucleus. Its function is as follows. May play an important role in neural development; the dorsomedial roof of the third ventricle. The sequence is that of Protein FAM53A from Mus musculus (Mouse).